We begin with the raw amino-acid sequence, 150 residues long: D-aminoacyl-tRNA deacylase (150 aa).

The Gly-cisPro motif, important for rejection of L-amino acids signature appears at 137–138; sequence GP.

This sequence belongs to the DTD family. Homodimer.

The protein resides in the cytoplasm. It catalyses the reaction glycyl-tRNA(Ala) + H2O = tRNA(Ala) + glycine + H(+). The enzyme catalyses a D-aminoacyl-tRNA + H2O = a tRNA + a D-alpha-amino acid + H(+). Functionally, an aminoacyl-tRNA editing enzyme that deacylates mischarged D-aminoacyl-tRNAs. Also deacylates mischarged glycyl-tRNA(Ala), protecting cells against glycine mischarging by AlaRS. Acts via tRNA-based rather than protein-based catalysis; rejects L-amino acids rather than detecting D-amino acids in the active site. By recycling D-aminoacyl-tRNA to D-amino acids and free tRNA molecules, this enzyme counteracts the toxicity associated with the formation of D-aminoacyl-tRNA entities in vivo and helps enforce protein L-homochirality. In Alkalilimnicola ehrlichii (strain ATCC BAA-1101 / DSM 17681 / MLHE-1), this protein is D-aminoacyl-tRNA deacylase.